Consider the following 1065-residue polypeptide: MNKSENLLFAGSSLASQVHAAAVNGDKGALQRLIVGNSALKDKEDQFGRTPLMYCVLADRLDCADALLKAGADVNKTDHSQRTALHLAAQKGNYRFMKLLLTRRANWMQKDLEEMTPLHLTTRHRSPKCLALLLKFMAPGEVDTQDKNKQTALHWSAYYNNPEHVKLLIKHDSNIGIPDVEGKIPLHWAANHKDPSAVHTVRCILDAAPTESLLNWQDYEGRTPLHFAVADGNVTVVDVLTSYESCNITSYDNLFRTPLHWAALLGHAQIVHLLLERNKSGTIPSDSQGATPLHYAAQSNFAETVKVFLKHPSVKDDSDLEGRTSFMWAAGKGSDDVLRTMLSLKSDIDINMADKYGGTALHAAALSGHVSTVKLLLENNAQVDATDVMKHTPLFRACEMGHKDVIQTLIKGGARVDLVDQDGHSLLHWAALGGNADVCQILIENKINPNVQDYAGRTPLQCAAYGGYINCMAVLMENNADPNIQDKEGRTALHWSCNNGYLDAIKLLLDFAAFPNQMENNEERYTPLDYALLGERHEVIQFMLEHGALSIAAIQDIAAFKIQAVYKGYKVRKAFRDRKNLLMKHEQLRKDAAAKKREEENKRKEAEQQKGRRSPDSCRPQALPCLPSTQDVPSRQSRAPSKQPPAGNVAQGPEPRDSRGSPGGSLGGALQKEQHVSSDLQGTNSRRPNETAREHSKGQSACVHFRPNEGSDGSRHPGVPSVEKSRGETAGDERCAKGKGFVKQPSCIRVAGPDEKGEDSRRAAASLPPHDSHWKPSRRHDTEPKAKCAPQKRRTQELRGGRCSPAGSSRPGSARGEAVHAGQNPPHHRTPRNKVTQAKLTGGLYSHLPQSTEELRSGARRLETSTLSEDFQVSKETDPAPGPLSGQSVNIDLLPVELRLQIIQRERRRKELFRKKNKAAAVIQRAWRSYQLRKHLSHLRHMKQLGAGDVDRWRQESTALLLQVWRKELELKFPQTTAVSKAPKSPSKGTSGTKSTKHSVLKQIYGCSHEGKIHHPTRSVKASSVLRLNSVSNLQCIHLLENSGRSKNFSYNLQSATQPKNKTKP.

ANK repeat units follow at residues 13–42 (SLAS…ALKD), 47–76 (FGRT…DVNK), 80–110 (SQRT…WMQK), 113–144 (EEMT…EVDT), 148–177 (NKQT…NIGI), 181–213 (EGKI…TESL), 220–250 (EGRT…NITS), 254–283 (LFRT…SGTI), 288–317 (QGAT…VKDD), 321–350 (EGRT…DIDI), 356–385 (YGGT…QVDA), 389–418 (MKHT…RVDL), 422–451 (DGHS…NPNV), 455–484 (AGRT…DPNI), 488–517 (EGRT…FPNQ), and 523–553 (ERYT…SIAA). Residue asparagine 75 is modified to 3-hydroxyasparagine. A D-box 1 motif is present at residues 490-498 (RTALHWSCN). One can recognise an IQ 1 domain in the interval 555–584 (QDIAAFKIQAVYKGYKVRKAFRDRKNLLMK). Positions 589–616 (RKDAAAKKREEENKRKEAEQQKGRRSPD) are enriched in basic and acidic residues. Disordered stretches follow at residues 589–833 (RKDA…TPRN) and 847–886 (HLPQ…PLSG). Residues 627–640 (PSTQDVPSRQSRAP) are compositionally biased toward polar residues. Serine 661 is subject to Phosphoserine. The span at 677 to 686 (SSDLQGTNSR) shows a compositional bias: polar residues. 6 stretches are compositionally biased toward basic and acidic residues: residues 687 to 697 (RPNETAREHSK), 706 to 715 (RPNEGSDGSR), 723 to 736 (EKSR…ERCA), 752 to 762 (GPDEKGEDSRR), 770 to 786 (HDSH…EPKA), and 853 to 863 (EELRSGARRLE). A D-box 2 motif is present at residues 909-917 (RKELFRKKN). The 30-residue stretch at 916-945 (KNKAAAVIQRAWRSYQLRKHLSHLRHMKQL) folds into the IQ 2 domain. The interval 976–999 (TTAVSKAPKSPSKGTSGTKSTKHS) is disordered. A compositionally biased stretch (low complexity) spans 983-994 (PKSPSKGTSGTK).

Binds calmodulin via its IQ domains. Interacts with APC2. Interacts with alpha-, beta-, and gamma-catenin. Interacts with N-cadherin (CDH2). Interacts with microtubules. Interacts with NPHP1. Interacts with DVL1, PRICKLE (PRICKLE1 or PRICKLE2) and Strabismus (VANGL1 or VANGL2). Interacts with IQCB1; the interaction likely requires additional interactors. Component of a complex containing at least ANKS6, INVS, NEK8 and NPHP3. ANKS6 may organize complex assembly by linking INVS and NPHP3 to NEK8 and INVS may target the complex to the proximal ciliary axoneme. In terms of processing, may be ubiquitinated via its interaction with APC2. Post-translationally, hydroxylated at Asn-75, most probably by HIF1AN. In terms of tissue distribution, widely expressed. Strongly expressed in the primary cilia of renal tubular cells.

It is found in the cytoplasm. The protein localises to the cytoskeleton. Its subcellular location is the spindle. It localises to the membrane. The protein resides in the nucleus. It is found in the cell projection. The protein localises to the cilium. Required for normal renal development and establishment of left-right axis. Probably acts as a molecular switch between different Wnt signaling pathways. Inhibits the canonical Wnt pathway by targeting cytoplasmic disheveled (DVL1) for degradation by the ubiquitin-proteasome. This suggests that it is required in renal development to oppose the repression of terminal differentiation of tubular epithelial cells by Wnt signaling. Involved in the organization of apical junctions in kidney cells together with NPHP1, NPHP4 and RPGRIP1L/NPHP8. Does not seem to be strictly required for ciliogenesis. This Homo sapiens (Human) protein is Inversin (INVS).